The primary structure comprises 296 residues: UDP-N-acetylglucosamine transporter TMEM241 (296 aa).

The next 10 helical transmembrane spans lie at 7-29 (LVGLTFCTCYLASYLTNKYVLSV), 32-52 (FTYPTLFQGWQTLIGGLLLHV), 67-87 (SHVLVWLPASVLFVGIIYAGS), 93-113 (LAIPVFLTLHNVAEVIICGYQ), 121-141 (TSPAKICSALLLLAAAGCLPF), 146-166 (FNPDGYFWAIIHLLCVGAYKI), 187-207 (IFSVVLLAFASHPTGDLFSVL), 211-231 (FLYFYRFHGSCCASGFLGFFL), 250-270 (WIFFAKIITAGLSILLFDAIL), and 271-291 (TSATTGCLLLGALGEALLVFS).

The protein belongs to the nucleotide-sugar transporter family. SLC35A subfamily.

It is found in the golgi apparatus. The protein localises to the cis-Golgi network membrane. Golgi-localized UDP-N-acetylglucosamine (UDP-GlcNAc) transporter that transports UDP-N-acetylglucosamine into Golgi lumen. Contributes to lysosomal targeting of NPC2, a key protein required for lysosomal cholesterol exiting, and that utilizes the mannose-6-phosphate (M6P) modification pathway for its lysosomal targeting. The sequence is that of UDP-N-acetylglucosamine transporter TMEM241 from Homo sapiens (Human).